Here is a 365-residue protein sequence, read N- to C-terminus: Mannose-1-phosphate guanylyltransferase catalytic subunit beta (365 aa).

Residues 2–221 are substrate-binding domain; sequence KALILVGGYG…PGFWMDVGQP (220 aa). Position 109 (Asp-109) interacts with GDP-alpha-D-mannose. Asp-109 is a binding site for Mg(2+). The active site involves Lys-161. Residue Asp-217 coordinates GDP-alpha-D-mannose. Asp-217 lines the Mg(2+) pocket. The interval 244-365 is hexapeptide repeat domain; that stretch reads ETGSNIHPTA…VNVPSKDIIM (122 aa).

This sequence belongs to the transferase hexapeptide repeat family. In terms of assembly, component of the GMPPA-GMPPB mannose-1-phosphate guanylyltransferase complex composed of 4 GMPPA subunits and 8 tag-335/GMPPB subunits; the complex is organized into three layers, a central layer made up of 2 GMPPA dimers sandwiched between two layers each made up of 2 tag-335/GMPPB dimers. Catalytic activity of tag-335/GMPPB is reduced when part of the complex and binding of GDP-alpha-D-Mannose by GMPPA induces allosteric feedback inhibition of tag-335/GMPPB. Mg(2+) is required as a cofactor.

It carries out the reaction alpha-D-mannose 1-phosphate + GTP + H(+) = GDP-alpha-D-mannose + diphosphate. It functions in the pathway nucleotide-sugar biosynthesis; GDP-alpha-D-mannose biosynthesis; GDP-alpha-D-mannose from alpha-D-mannose 1-phosphate (GTP route): step 1/1. With respect to regulation, enzyme activity is reduced by incorporation into the GMPPA-GMPPB mannose-1-phosphate guanylyltransferase complex. Allosterically inhibited, when part of the GMPPA-GMPPB complex, by GDP-alpha-D-mannose binding to GMPPA. Functionally, catalytic subunit of the GMPPA-GMPPB mannose-1-phosphate guanylyltransferase complex. Catalyzes the formation of GDP-mannose, an essential precursor of glycan moieties of glycoproteins and glycolipids. Can catalyze the reverse reaction in vitro. Together with GMPPA regulates GDP-alpha-D-mannose levels. The protein is Mannose-1-phosphate guanylyltransferase catalytic subunit beta (tag-335) of Caenorhabditis elegans.